A 302-amino-acid chain; its full sequence is Methionyl-tRNA formyltransferase (302 aa).

108-111 (SLLP) is a (6S)-5,6,7,8-tetrahydrofolate binding site.

Belongs to the Fmt family.

It carries out the reaction L-methionyl-tRNA(fMet) + (6R)-10-formyltetrahydrofolate = N-formyl-L-methionyl-tRNA(fMet) + (6S)-5,6,7,8-tetrahydrofolate + H(+). In terms of biological role, attaches a formyl group to the free amino group of methionyl-tRNA(fMet). The formyl group appears to play a dual role in the initiator identity of N-formylmethionyl-tRNA by promoting its recognition by IF2 and preventing the misappropriation of this tRNA by the elongation apparatus. The protein is Methionyl-tRNA formyltransferase of Nitratiruptor sp. (strain SB155-2).